The primary structure comprises 575 residues: Potassium-transporting ATPase potassium-binding subunit (575 aa).

The next 12 membrane-spanning stretches (helical) occupy residues 3 to 23 (FEGV…VPFF), 69 to 89 (AVLA…LLQG), 136 to 156 (CFQF…IAFI), 178 to 198 (ILMP…VPQS), 266 to 286 (LLEI…FGVL), 293 to 313 (GWVL…VAAL), 340 to 360 (FGWA…TGAV), 367 to 387 (LTPL…IWGG), 391 to 411 (GIAY…LMVG), 431 to 451 (IIFL…LAIP), 498 to 518 (VVLL…AGGL), and 543 to 563 (AGTI…LGPI).

This sequence belongs to the KdpA family. As to quaternary structure, the system is composed of three essential subunits: KdpA, KdpB and KdpC.

The protein localises to the cell inner membrane. In terms of biological role, part of the high-affinity ATP-driven potassium transport (or Kdp) system, which catalyzes the hydrolysis of ATP coupled with the electrogenic transport of potassium into the cytoplasm. This subunit binds the periplasmic potassium ions and delivers the ions to the membrane domain of KdpB through an intramembrane tunnel. This chain is Potassium-transporting ATPase potassium-binding subunit, found in Gloeobacter violaceus (strain ATCC 29082 / PCC 7421).